The primary structure comprises 1057 residues: Carbamoyl phosphate synthase large chain (1057 aa).

A carboxyphosphate synthetic domain region spans residues 1–401 (MPKRDDIKTI…SLLKAIRSLE (401 aa)). The ATP site is built by Arg129, Arg169, Gly175, Gly176, Lys208, Ile210, Glu215, Gly241, Ile242, His243, Gln284, and Glu298. An ATP-grasp 1 domain is found at 133–327 (RTLMNDLNVP…IAKLAAKIAV (195 aa)). Residues Gln284, Glu298, and Asn300 each contribute to the Mg(2+) site. Mn(2+) is bound by residues Gln284, Glu298, and Asn300. An oligomerization domain region spans residues 402-546 (YGVHHLGLSN…YGTYEYENES (145 aa)). The segment at 547–929 (IVTDKEKILV…ALYKGLTGSG (383 aa)) is carbamoyl phosphate synthetic domain. The 191-residue stretch at 671–861 (EALLREIAVP…MAQLAMRAIM (191 aa)) folds into the ATP-grasp 2 domain. Positions 707, 746, 748, 752, 777, 778, 779, 780, 820, and 832 each coordinate ATP. Mg(2+)-binding residues include Gln820, Glu832, and Asn834. Mn(2+) is bound by residues Gln820, Glu832, and Asn834. The MGS-like domain maps to 930–1057 (FEVKDHGTVL…ESMTFTMRNV (128 aa)). The allosteric domain stretch occupies residues 930 to 1057 (FEVKDHGTVL…ESMTFTMRNV (128 aa)).

It belongs to the CarB family. Composed of two chains; the small (or glutamine) chain promotes the hydrolysis of glutamine to ammonia, which is used by the large (or ammonia) chain to synthesize carbamoyl phosphate. Tetramer of heterodimers (alpha,beta)4. Mg(2+) is required as a cofactor. The cofactor is Mn(2+).

It carries out the reaction hydrogencarbonate + L-glutamine + 2 ATP + H2O = carbamoyl phosphate + L-glutamate + 2 ADP + phosphate + 2 H(+). It catalyses the reaction hydrogencarbonate + NH4(+) + 2 ATP = carbamoyl phosphate + 2 ADP + phosphate + 2 H(+). It functions in the pathway amino-acid biosynthesis; L-arginine biosynthesis; carbamoyl phosphate from bicarbonate: step 1/1. The protein operates within pyrimidine metabolism; UMP biosynthesis via de novo pathway; (S)-dihydroorotate from bicarbonate: step 1/3. In terms of biological role, large subunit of the glutamine-dependent carbamoyl phosphate synthetase (CPSase). CPSase catalyzes the formation of carbamoyl phosphate from the ammonia moiety of glutamine, carbonate, and phosphate donated by ATP, constituting the first step of 2 biosynthetic pathways, one leading to arginine and/or urea and the other to pyrimidine nucleotides. The large subunit (synthetase) binds the substrates ammonia (free or transferred from glutamine from the small subunit), hydrogencarbonate and ATP and carries out an ATP-coupled ligase reaction, activating hydrogencarbonate by forming carboxy phosphate which reacts with ammonia to form carbamoyl phosphate. This chain is Carbamoyl phosphate synthase large chain, found in Staphylococcus epidermidis (strain ATCC 12228 / FDA PCI 1200).